A 238-amino-acid chain; its full sequence is Ribonuclease PH (238 aa).

Phosphate contacts are provided by residues R86 and 124–126; that span reads GTR.

This sequence belongs to the RNase PH family. In terms of assembly, homohexameric ring arranged as a trimer of dimers.

The enzyme catalyses tRNA(n+1) + phosphate = tRNA(n) + a ribonucleoside 5'-diphosphate. Functionally, phosphorolytic 3'-5' exoribonuclease that plays an important role in tRNA 3'-end maturation. Removes nucleotide residues following the 3'-CCA terminus of tRNAs; can also add nucleotides to the ends of RNA molecules by using nucleoside diphosphates as substrates, but this may not be physiologically important. Probably plays a role in initiation of 16S rRNA degradation (leading to ribosome degradation) during starvation. The sequence is that of Ribonuclease PH from Psychrobacter sp. (strain PRwf-1).